Reading from the N-terminus, the 414-residue chain is MIEVLLVTICLAVFPYQGSSIILESGNVNDYEVVYPRKVTALPKGAVQPKYEDAMQYELKVNGEPVVLHLEKNKELFSKDYSETHYSPDGRKITTNPSVEDHCYYRGRIENDADSTASISACNGLKGHFKLQGEMYLIEPLELSDSEAHAVFKLENVEKEDEAPKMCGVTQNWESYEPIKKASDLNLNPDQQNLPQRYIELVVVADHRVFMKYNSDLNTIRTRVHEIVNFINGFYRSLNIHVSLTDLEIWSNEDQINIQSASSDTLNAFAEWRETDLLNRKSHDNAQLLTAIELDEETLGLAPLGTMCDPKLSIGIVQDHSPINLLMGVTMAHELGHNLGMEHDGKDCLRGASLCIMRPGLTKGRSYEFSDDSMHYYERFLKQYKPQCILNKPLRIDPVSTPVSGNELLEAGEE.

A signal peptide spans Met1–Ser20. Residues Ile21–Asp190 constitute a propeptide that is removed on maturation. Pyrrolidone carboxylic acid is present on Gln191. One can recognise a Peptidase M12B domain in the interval Arg197–Pro393. Residues Glu200 and Asp284 each coordinate Ca(2+). 2 disulfides stabilise this stretch: Cys308/Cys388 and Cys348/Cys355. His333 lines the Zn(2+) pocket. Glu334 is a catalytic residue. Zn(2+) contacts are provided by His337 and His343. The Ca(2+) site is built by Cys388 and Asn391. The propeptide occupies Leu394–Glu414.

Belongs to the venom metalloproteinase (M12B) family. P-I subfamily. Monomer. Zn(2+) is required as a cofactor. The N-terminus is blocked. In terms of tissue distribution, expressed by the venom gland.

It localises to the secreted. The catalysed reaction is Cleavage of 5-His-|-Leu-6, 10-His-|-Leu-11, 14-Ala-|-Leu-15, 16-Tyr-|-Leu-17 and 23-Gly-|-Phe-24 of insulin B chain. With small molecule substrates prefers hydrophobic residue at P2' and small residue such as Ala, Gly at P1.. Its function is as follows. Snake venom zinc metalloproteinase that causes hemorrhage by provoking the degradation of the sub-endothelial matrix proteins (fibronectin, laminin, type IV collagen, nidogen, and gelatins). The polypeptide is Snake venom metalloproteinase atrolysin-D (Crotalus atrox (Western diamondback rattlesnake)).